Here is a 2610-residue protein sequence, read N- to C-terminus: E3 ubiquitin-protein ligase HECTD1 (2610 aa).

A disordered region spans residues 246 to 269 (TVSGPSSACKPGRSTTGAPSTTAD). The span at 258–269 (RSTTGAPSTTAD) shows a compositional bias: polar residues. ANK repeat units follow at residues 395–424 (VGQT…DVNR), 426–455 (QRSS…NPDL), 459–491 (DGKT…PVNK), and 579–612 (ITAT…DIFL). The tract at residues 489–513 (VNKGDDKKKKDTNKDEEECNEPKGD) is disordered. Over residues 491–501 (KGDDKKKKDTN) the composition is skewed to basic and acidic residues. Disordered regions lie at residues 627 to 657 (LAGP…ELQQ) and 707 to 748 (SSGS…LSAP). Phosphoserine is present on residues serine 631 and serine 640. A compositionally biased stretch (basic and acidic residues) spans 639 to 657 (ESKPEKEDEPQEDAKELQQ). The segment covering 707–717 (SSGSPEGGSDS) has biased composition (low complexity). Positions 718-729 (SESRSEFLEKLQ) are enriched in basic and acidic residues. The MIB/HERC2 domain maps to 1266–1338 (VRSQVLKYMV…KFDLKLAPGY (73 aa)). Disordered stretches follow at residues 1343-1406 (VASP…KTER) and 1433-1483 (ENVP…SMGI). Over residues 1348 to 1365 (PVSSTVSGTTQSWSSLVK) the composition is skewed to polar residues. 2 stretches are compositionally biased toward low complexity: residues 1373–1395 (SAAA…ASSS) and 1441–1458 (GSSS…TGSE). Serine 1384 bears the Phosphoserine mark. Over residues 1469–1479 (SVRTPGESSAI) the composition is skewed to polar residues. At serine 1488 the chain carries Phosphoserine. The tract at residues 1496-1515 (ELTNKEAASQRPLSSSASNR) is disordered. Serine 1567 is modified (phosphoserine). 2 disordered regions span residues 1592–1611 (GAQS…VTMS) and 1674–1757 (ELDD…KGGR). A compositionally biased stretch (low complexity) spans 1600 to 1611 (TTPGTTSTVTMS). Over residues 1674-1703 (ELDDDEDLPEPDEEDDENEDDNQEDQEYEE) the composition is skewed to acidic residues. Threonine 1760 is subject to Phosphothreonine. Position 1772 is a phosphoserine (serine 1772). Residues 1777–1797 (AFDPRPGRTNVQQTTDLEIPP) are disordered. The interval 2029–2103 (FTFPPDEFTS…AIVWLQNRRE (75 aa)) is K-box. The 460-residue stretch at 2151–2610 (IHADRKSVLE…ATMEKGFHLN (460 aa)) folds into the HECT domain. A disordered region spans residues 2297 to 2318 (HCTESQSEASTEEGHDSLSVGS). Serine 2318 carries the post-translational modification Phosphoserine. Cysteine 2579 (glycyl thioester intermediate) is an active-site residue.

The protein belongs to the UPL family. K-HECT subfamily. Interacts with IGSF1.

It carries out the reaction S-ubiquitinyl-[E2 ubiquitin-conjugating enzyme]-L-cysteine + [acceptor protein]-L-lysine = [E2 ubiquitin-conjugating enzyme]-L-cysteine + N(6)-ubiquitinyl-[acceptor protein]-L-lysine.. Its pathway is protein modification; protein ubiquitination. In terms of biological role, E3 ubiquitin-protein ligase which accepts ubiquitin from an E2 ubiquitin-conjugating enzyme in the form of a thioester and then directly transfers the ubiquitin to targeted substrates. Mediates 'Lys-63'-linked polyubiquitination of HSP90AA1 which leads to its intracellular localization and reduced secretion. Negatively regulating HSP90AA1 secretion in cranial mesenchyme cells may impair their emigration and may be essential for the correct development of the cranial neural folds and neural tube closure. Catalyzes ubiquitination and degradation of ZNF622, an assembly factor for the ribosomal 60S subunit, in hematopoietic cells, thereby promoting hematopoietic stem cell renewal. The polypeptide is E3 ubiquitin-protein ligase HECTD1 (Homo sapiens (Human)).